A 944-amino-acid chain; its full sequence is Leucine--tRNA ligase (944 aa).

Positions 40–51 (PYPSGAGLHVGH) match the 'HIGH' region motif. The 'KMSKS' region motif lies at 718 to 722 (KMSKS). An ATP-binding site is contributed by K721.

It belongs to the class-I aminoacyl-tRNA synthetase family.

The protein resides in the cytoplasm. The enzyme catalyses tRNA(Leu) + L-leucine + ATP = L-leucyl-tRNA(Leu) + AMP + diphosphate. The polypeptide is Leucine--tRNA ligase (Phocaeicola vulgatus (strain ATCC 8482 / DSM 1447 / JCM 5826 / CCUG 4940 / NBRC 14291 / NCTC 11154) (Bacteroides vulgatus)).